The chain runs to 274 residues: Large ribosomal subunit protein uL2c (274 aa).

The disordered stretch occupies residues 230-252; that stretch reads HPHGGGEGRSPIGRSKPLTPWGK.

The protein belongs to the universal ribosomal protein uL2 family. In terms of assembly, part of the 50S ribosomal subunit.

It is found in the plastid. In Euglena longa (Euglenophycean alga), this protein is Large ribosomal subunit protein uL2c (rpl2).